We begin with the raw amino-acid sequence, 318 residues long: MDQDALISKEDSEVEREASGGRESLSDVIGFLDAVLSSEPTDIGGDRSWLHNTINTLQRPGSTHRVKGEGEGEVSTSSTQDNRSGEESRVSGGTSEPEAEAHARNVDKQNIHWATGRGASTDSVPQDLGNGRDSGILEDPPNEGGYPRSGAEDENREMAANPDKRGEDQAEGLPEEIRRSAPLPDEREGRADNNGRGVEPGSPHSARVTGVLVIPSPELEEAVLQRNKRRPANSGSRSLTPVVVPSTRSPPPDHDNSTRSPPRKPPTTQDEHTNPRNTPAVRIKDRRPPTGTRSAPDRPTDGYPTHPSPETDATKKGA.

2 disordered regions span residues M1–E23 and I54–A318. Composition is skewed to basic and acidic residues over residues I7–G20, A99–N110, G150–D168, and E175–N193. Residues S249, S257, and S260 each carry the phosphoserine; by host modification.

This chain is Protein W (P/V/C), found in Sendai virus (strain Ohita) (SeV).